Consider the following 1183-residue polypeptide: DNA-directed RNA polymerase subunit beta (1183 aa).

The protein belongs to the RNA polymerase beta chain family. The RNAP catalytic core consists of 2 alpha, 1 beta, 1 beta' and 1 omega subunit. When a sigma factor is associated with the core the holoenzyme is formed, which can initiate transcription.

The enzyme catalyses RNA(n) + a ribonucleoside 5'-triphosphate = RNA(n+1) + diphosphate. In terms of biological role, DNA-dependent RNA polymerase catalyzes the transcription of DNA into RNA using the four ribonucleoside triphosphates as substrates. This is DNA-directed RNA polymerase subunit beta from Staphylococcus aureus (strain JH9).